A 292-amino-acid polypeptide reads, in one-letter code: Polyamine aminopropyltransferase 1 (292 aa).

A PABS domain is found at 1-244 (MELGMFRLNI…YVNSFVFASD (244 aa)). Gln-35 contacts S-methyl-5'-thioadenosine. Residues His-66 and Glu-90 each coordinate spermidine. S-methyl-5'-thioadenosine contacts are provided by residues Asp-110 and 142–143 (DG). The active-site Proton acceptor is Asp-163.

Belongs to the spermidine/spermine synthase family. As to quaternary structure, homodimer or homotetramer.

Its subcellular location is the cytoplasm. The catalysed reaction is norspermine + S-adenosyl 3-(methylsulfanyl)propylamine = caldopentamine + S-methyl-5'-thioadenosine + 2 H(+). The enzyme catalyses norspermidine + S-adenosyl 3-(methylsulfanyl)propylamine = norspermine + S-methyl-5'-thioadenosine + H(+). It carries out the reaction S-adenosyl 3-(methylsulfanyl)propylamine + spermidine = thermospermine + S-methyl-5'-thioadenosine + H(+). In terms of biological role, involved in the biosynthesis of polyamines which are thought to support the growth of thermophilic microorganisms under high-temperature conditions. It seems that long-chain and branched-chain of polyamines effectively stabilize DNA and RNA, respectively. Catalyzes the irreversible transfer of a propylamine group from the amino donor S-adenosylmethioninamine (decarboxy-AdoMet) to norspermidine, spermidine and norspermine to yield norspermine, thermospermine and caldopentamine, respectively. It can also synthesize sym-norspermidine (bis(3-aminopropyl)amine) from 1,3-diaminopropane with a very low activity. The biosynthesis of caldohexamine and caldoheptamine from caldopentamine has been also observed. The polypeptide is Polyamine aminopropyltransferase 1 (Hyperthermus butylicus (strain DSM 5456 / JCM 9403 / PLM1-5)).